The sequence spans 188 residues: Threonylcarbamoyl-AMP synthase (188 aa).

Residues 3 to 188 (QLHPSEIKDI…RSGKILRNGQ (186 aa)) form the YrdC-like domain.

This sequence belongs to the SUA5 family. TsaC subfamily.

The protein resides in the cytoplasm. The enzyme catalyses L-threonine + hydrogencarbonate + ATP = L-threonylcarbamoyladenylate + diphosphate + H2O. In terms of biological role, required for the formation of a threonylcarbamoyl group on adenosine at position 37 (t(6)A37) in tRNAs that read codons beginning with adenine. Catalyzes the conversion of L-threonine, HCO(3)(-)/CO(2) and ATP to give threonylcarbamoyl-AMP (TC-AMP) as the acyladenylate intermediate, with the release of diphosphate. The sequence is that of Threonylcarbamoyl-AMP synthase from Shewanella sp. (strain MR-4).